Here is an 879-residue protein sequence, read N- to C-terminus: Metabotropic glutamate receptor 3 (879 aa).

The signal sequence occupies residues 1–22 (MKMLTRLQILMLALFSKGFLLS). Over 23-576 (LGDHNFMRRE…EDYIKWEDAW (554 aa)) the chain is Extracellular. Cysteines 57 and 99 form a disulfide. Residues Arg68, Ser151, and 172 to 174 (AST) contribute to the L-glutamate site. N-linked (GlcNAc...) asparagine glycosylation is present at Asn209. Position 222 (Tyr222) interacts with L-glutamate. 7 cysteine pairs are disulfide-bonded: Cys240-Cys527, Cys361-Cys373, Cys412-Cys419, Cys509-Cys528, Cys513-Cys531, Cys534-Cys546, and Cys549-Cys562. N-linked (GlcNAc...) asparagine glycosylation occurs at Asn292. Asp301 lines the L-glutamate pocket. An L-glutamate-binding site is contributed by Lys389. N-linked (GlcNAc...) asparagine glycans are attached at residues Asn414 and Asn439. Residues 577–599 (AIGPVTIACLGFLCTCIVITVFI) traverse the membrane as a helical segment. The Cytoplasmic segment spans residues 600–613 (KHNNTPLVKASGRE). A helical transmembrane segment spans residues 614–634 (LCYILLFGVSLSYCMTFFFIA). At 635 to 645 (KPSPVICALRR) the chain is on the extracellular side. Residues 646-664 (LGLGTSFAICYSALLTKTN) form a helical membrane-spanning segment. Residues 665–688 (CIARIFDGVKNGAQRPKFISPSSQ) lie on the Cytoplasmic side of the membrane. The chain crosses the membrane as a helical span at residues 689–709 (VFICLGLILVQIVMVSVWLIL). The Extracellular segment spans residues 710–734 (ETPGTRRYTLPEKRETVILKCNVKD). Residues 735-756 (SSMLISLTYDVVLVILCTVYAF) form a helical membrane-spanning segment. The Cytoplasmic segment spans residues 757 to 769 (KTRKCPENFNEAK). The chain crosses the membrane as a helical span at residues 770 to 792 (FIGFTMYTTCIIWLAFLPIFYVT). Residues 793–802 (SSDYRVQTTT) are Extracellular-facing. Residues 803-828 (MCISVSLSGFVVLGCLFAPKVHIVLF) traverse the membrane as a helical segment. Over 829–879 (QPQKNVVTHRLHLNRFSVSGTATTYSQSSASTYVPTVCNGREVLDSTTSSL) the chain is Cytoplasmic.

It belongs to the G-protein coupled receptor 3 family. Interacts with TAMALIN. In terms of tissue distribution, is widely distributed in the CNS. Predominant expression is seen in the neuronal cells of the cerebral cortex, dentate gyrus, and glial cells throughout brain regions.

The protein resides in the cell membrane. In terms of biological role, G-protein coupled receptor for glutamate. Ligand binding causes a conformation change that triggers signaling via guanine nucleotide-binding proteins (G proteins) and modulates the activity of down-stream effectors. Signaling inhibits adenylate cyclase activity. The sequence is that of Metabotropic glutamate receptor 3 (Grm3) from Rattus norvegicus (Rat).